The following is a 37-amino-acid chain: Turripeptide Lol6.2 (37 aa).

3 disulfide bridges follow: cysteine 4-cysteine 16, cysteine 8-cysteine 21, and cysteine 15-cysteine 29.

In terms of tissue distribution, expressed by the venom duct.

The protein localises to the secreted. Functionally, acts as a neurotoxin by inhibiting an ion channel. The sequence is that of Turripeptide Lol6.2 from Iotyrris olangoensis (Sea snail).